We begin with the raw amino-acid sequence, 540 residues long: MQWLRTVAALREQVASWRGSTIGLVPTMGSLHEGHLSLIRRCRQECDHTVVSIFVNPLQFGPNEDWDRYPRDEEGDRALCEAAGVDVVFAPDPQEMGADPATAGDRTWVMPPESLLQTLCAPHRPGHFRGVATIVLQLLNLVQPQRAYFGQKDAQQLAIIQRLVQDLQIPTTIVPCPTVREADGLAYSSRNRYLSAVERQVAASLYRALRRGYDHWQAGDPSAEGILAAARAELERTPELRVQYLELVDPQTLQPLSEVKDKGLLAIAAYVGQTRLIDNLLLSPEGVDPLPQEQQSAVPPSPKRGRRPLIAIDGPAGAGKSSVARAVAAQLQLLYLDTGAMYRAITWLALQRGIPLDDAEQLTQLAAQTQLTLQSGPSADEPTRIWADGEEVTQAIRSPEVTRWVSQVAAVPGVRQELVKRQRLIGRDGGAVLEGRDIGTHVFPDAELKVFLTASVGERAQRRQHQLQAQGQVVSLEELKAQIEQRDRRDSERLISPLRPAPDAILIDTDHLSQAEVEDKIVRLYRQLLERSGAAHFDII.

Positions 1-280 are pantoate--beta-alanine ligase; it reads MQWLRTVAAL…VGQTRLIDNL (280 aa). 28 to 35 provides a ligand contact to ATP; sequence MGSLHEGH. The active-site Proton donor is the His35. Gln59 contacts (R)-pantoate. Gln59 serves as a coordination point for beta-alanine. Residue 150-153 coordinates ATP; it reads GQKD. Gln156 provides a ligand contact to (R)-pantoate. ATP contacts are provided by residues Val179 and 187–190; that span reads YSSR. The interval 281 to 540 is cytidylate kinase; sequence LLSPEGVDPL…RSGAAHFDII (260 aa). A disordered region spans residues 288–307; it reads DPLPQEQQSAVPPSPKRGRR.

It in the N-terminal section; belongs to the pantothenate synthetase family. This sequence in the C-terminal section; belongs to the cytidylate kinase family. Type 1 subfamily.

The protein localises to the cytoplasm. The enzyme catalyses (R)-pantoate + beta-alanine + ATP = (R)-pantothenate + AMP + diphosphate + H(+). The catalysed reaction is CMP + ATP = CDP + ADP. It catalyses the reaction dCMP + ATP = dCDP + ADP. It functions in the pathway cofactor biosynthesis; (R)-pantothenate biosynthesis; (R)-pantothenate from (R)-pantoate and beta-alanine: step 1/1. Catalyzes the condensation of pantoate with beta-alanine in an ATP-dependent reaction via a pantoyl-adenylate intermediate. In terms of biological role, catalyzes the transfer of a phosphate group from ATP to either CMP or dCMP to form CDP or dCDP and ADP, respectively. The chain is Bifunctional pantoate ligase/cytidylate kinase from Synechococcus sp. (strain JA-3-3Ab) (Cyanobacteria bacterium Yellowstone A-Prime).